We begin with the raw amino-acid sequence, 385 residues long: Hsp70/Hsp90 co-chaperone CNS1 (385 aa).

The segment at 1–37 (MSSVNANGGYTKPQKYVPGPGDPELPPQLSEFKDKTS) is disordered. TPR repeat units lie at residues 83–116 (AENF…ECED), 121–154 (ESLY…NPKN), and 155–189 (VKCY…DPEN).

It belongs to the TTC4 family. As to quaternary structure, monomer. Component of Hsp70 and Hsp90 chaperone complexes. Interacts (via TPR repeats) with HSC82 and HSP82 (via C-terminal MEEVD pentapeptide). Interacts with CPR7, SSA1 and SPI1.

The protein resides in the cytoplasm. Functionally, co-chaperone that binds to the molecular chaperones Hsp90 (HSC82 and HSP82) and Hsp70 (SSA1). Stimulates SSA1 ATPase activity, but not Hsp90 ATPase activity. Involved in only a subset of Hsp90 functions. This is Hsp70/Hsp90 co-chaperone CNS1 (CNS1) from Saccharomyces cerevisiae (strain ATCC 204508 / S288c) (Baker's yeast).